Consider the following 206-residue polypeptide: Probable glutathione S-transferase 8 (206 aa).

A GST N-terminal domain is found at 2-79 (VHYKLSYFPI…FLARQFGING (78 aa)). Glutathione is bound by residues Tyr-8, Trp-39, Lys-43, 49–51 (GQL), and 63–64 (QS). Positions 81-206 (CAWEEAQVNS…WLETRPETQF (126 aa)) constitute a GST C-terminal domain.

Belongs to the GST superfamily. Sigma family.

It carries out the reaction RX + glutathione = an S-substituted glutathione + a halide anion + H(+). Conjugation of reduced glutathione to a wide number of exogenous and endogenous hydrophobic electrophiles. This chain is Probable glutathione S-transferase 8 (gst-8), found in Caenorhabditis elegans.